Consider the following 343-residue polypeptide: Aspartate carbamoyltransferase catalytic subunit (343 aa).

Residues Arg91 and Thr92 each contribute to the carbamoyl phosphate site. Lys119 provides a ligand contact to L-aspartate. Carbamoyl phosphate contacts are provided by Arg141, His171, and Gln174. Residues Arg204 and Arg259 each contribute to the L-aspartate site. Positions 300 and 301 each coordinate carbamoyl phosphate.

It belongs to the aspartate/ornithine carbamoyltransferase superfamily. ATCase family. In terms of assembly, heterododecamer (2C3:3R2) of six catalytic PyrB chains organized as two trimers (C3), and six regulatory PyrI chains organized as three dimers (R2).

It catalyses the reaction carbamoyl phosphate + L-aspartate = N-carbamoyl-L-aspartate + phosphate + H(+). The protein operates within pyrimidine metabolism; UMP biosynthesis via de novo pathway; (S)-dihydroorotate from bicarbonate: step 2/3. Its function is as follows. Catalyzes the condensation of carbamoyl phosphate and aspartate to form carbamoyl aspartate and inorganic phosphate, the committed step in the de novo pyrimidine nucleotide biosynthesis pathway. This Burkholderia mallei (strain NCTC 10247) protein is Aspartate carbamoyltransferase catalytic subunit.